We begin with the raw amino-acid sequence, 376 residues long: TraB domain-containing protein (376 aa).

At M1 the chain carries N-acetylmethionine. At T64 the chain carries Phosphothreonine.

This chain is TraB domain-containing protein (Trabd), found in Mus musculus (Mouse).